The chain runs to 443 residues: Glucose-6-phosphate isomerase (443 aa).

Glu285 functions as the Proton donor in the catalytic mechanism. Residues His306 and Lys420 contribute to the active site.

It belongs to the GPI family.

The protein localises to the cytoplasm. It carries out the reaction alpha-D-glucose 6-phosphate = beta-D-fructose 6-phosphate. The protein operates within carbohydrate biosynthesis; gluconeogenesis. It participates in carbohydrate degradation; glycolysis; D-glyceraldehyde 3-phosphate and glycerone phosphate from D-glucose: step 2/4. In terms of biological role, catalyzes the reversible isomerization of glucose-6-phosphate to fructose-6-phosphate. This chain is Glucose-6-phosphate isomerase, found in Staphylococcus aureus (strain USA300).